Consider the following 266-residue polypeptide: Pyridoxal phosphate phosphatase YigL (266 aa).

Asp-8 (nucleophile) is an active-site residue. Asp-8 serves as a coordination point for Mg(2+). Phosphate is bound at residue Leu-9. Asp-10 is a binding site for Mg(2+). Phosphate-binding positions include 42–43 and Lys-191; that span reads TG. Residue Asp-214 coordinates Mg(2+). Asn-217 contributes to the phosphate binding site.

Belongs to the HAD-like hydrolase superfamily. Cof family. The cofactor is Mg(2+). Requires Mn(2+) as cofactor. Co(2+) is required as a cofactor. Zn(2+) serves as cofactor.

The enzyme catalyses pyridoxal 5'-phosphate + H2O = pyridoxal + phosphate. The catalysed reaction is sugar phosphate + H2O = sugar + phosphate.. Its function is as follows. Catalyzes the dephosphorylation of pyridoxal-phosphate (PLP) and sugar phosphate. In Escherichia coli O157:H7, this protein is Pyridoxal phosphate phosphatase YigL (yigL).